The sequence spans 358 residues: Histidinol-phosphate aminotransferase (358 aa).

Residue Lys210 is modified to N6-(pyridoxal phosphate)lysine.

Belongs to the class-II pyridoxal-phosphate-dependent aminotransferase family. Histidinol-phosphate aminotransferase subfamily. Homodimer. The cofactor is pyridoxal 5'-phosphate.

It catalyses the reaction L-histidinol phosphate + 2-oxoglutarate = 3-(imidazol-4-yl)-2-oxopropyl phosphate + L-glutamate. The protein operates within amino-acid biosynthesis; L-histidine biosynthesis; L-histidine from 5-phospho-alpha-D-ribose 1-diphosphate: step 7/9. This chain is Histidinol-phosphate aminotransferase, found in Clostridium beijerinckii (strain ATCC 51743 / NCIMB 8052) (Clostridium acetobutylicum).